The primary structure comprises 574 residues: Kelch-like protein 18 (574 aa).

The BTB domain maps to 66–105; it reads MFTNDMMECKQDEIVMQGMDPSALEALINFAYNGNLAIDQ. Positions 140 to 242 constitute a BACK domain; that stretch reads CLGVRQFAET…RPQFLSDRVQ (103 aa). Kelch repeat units lie at residues 289 to 336, 337 to 383, 384 to 430, 432 to 477, 479 to 524, and 525 to 571; these read LIYA…VVNG, LLYA…VLDG, QIYV…VFEG, IYVS…SLGS, MFVC…ASCG, and RLYA…CIPL.

As to quaternary structure, interacts with AURKA. Interacts (via BTB domain) with CUL3. Interacts (via kelch repeats) with UNC119.

The protein operates within protein modification; protein ubiquitination. Its function is as follows. Substrate-specific adapter of a BCR (BTB-CUL3-RBX1) E3 ubiquitin-protein ligase complex required for mitotic progression and cytokinesis. The BCR(KLHL18) E3 ubiquitin ligase complex mediates the ubiquitination of AURKA leading to its activation at the centrosome which is required for initiating mitotic entry. Regulates light-and dark-dependent alpha-transducin localization changes in rod photoreceptors through UNC119 ubiquitination and degradation. Preferentially ubiquitinates the unphosphorylated form of UNC119 over the phosphorylated form. In the presence of UNC119, under dark-adapted conditions alpha-transducin mislocalizes from the outer segment to the inner part of rod photoreceptors which leads to decreased photoreceptor damage caused by light. The polypeptide is Kelch-like protein 18 (KLHL18) (Homo sapiens (Human)).